Consider the following 130-residue polypeptide: Small ribosomal subunit protein uS8 (130 aa).

It belongs to the universal ribosomal protein uS8 family. Part of the 30S ribosomal subunit. Contacts proteins S5 and S12.

Its function is as follows. One of the primary rRNA binding proteins, it binds directly to 16S rRNA central domain where it helps coordinate assembly of the platform of the 30S subunit. The polypeptide is Small ribosomal subunit protein uS8 (Actinobacillus succinogenes (strain ATCC 55618 / DSM 22257 / CCUG 43843 / 130Z)).